The following is a 408-amino-acid chain: DNA primase DnaG (408 aa).

One can recognise a Toprim domain in the interval Glu-166–Pro-241. Mg(2+)-binding residues include Glu-172, Asp-215, and Asp-217.

It belongs to the archaeal DnaG primase family. In terms of assembly, forms a ternary complex with MCM helicase and DNA. Component of the archaeal exosome complex. Mg(2+) is required as a cofactor.

The enzyme catalyses ssDNA + n NTP = ssDNA/pppN(pN)n-1 hybrid + (n-1) diphosphate.. RNA polymerase that catalyzes the synthesis of short RNA molecules used as primers for DNA polymerase during DNA replication. Also part of the exosome, which is a complex involved in RNA degradation. Acts as a poly(A)-binding protein that enhances the interaction between heteromeric, adenine-rich transcripts and the exosome. The polypeptide is DNA primase DnaG (Desulfurococcus amylolyticus (strain DSM 18924 / JCM 16383 / VKM B-2413 / 1221n) (Desulfurococcus kamchatkensis)).